Reading from the N-terminus, the 198-residue chain is Recombination protein RecR (198 aa).

The C4-type zinc finger occupies 57–72 (CSICGNLTESDPCAIC). The Toprim domain occupies 80-175 (TTILVVEESK…KVTRLARGLA (96 aa)).

The protein belongs to the RecR family.

Functionally, may play a role in DNA repair. It seems to be involved in an RecBC-independent recombinational process of DNA repair. It may act with RecF and RecO. This chain is Recombination protein RecR, found in Lactococcus lactis subsp. cremoris (strain MG1363).